Here is a 486-residue protein sequence, read N- to C-terminus: Arginine/agmatine antiporter (486 aa).

12 helical membrane passes run 12 to 32, 41 to 61, 85 to 105, 132 to 152, 160 to 180, 211 to 231, 242 to 262, 296 to 316, 341 to 361, 367 to 387, 418 to 438, and 461 to 481; these read LGAI…GIFS, AGVG…FFIA, GFGP…QIFG, PAIL…LKGI, IIGT…TAFL, STML…VMSA, ATIL…ILPF, VGLL…VAEI, VSLY…YFST, MLSI…AFLV, IWLI…LLAL, and EVTE…LFST.

Belongs to the amino acid-polyamine-organocation (APC) superfamily. Basic amino acid/polyamine antiporter (APA) (TC 2.A.3.2) family.

The protein localises to the cell inner membrane. In terms of biological role, catalyzes the exchange of L-arginine for agmatine. The arginine uptake by the bacterium in the macrophage may be a virulence factor against the host innate immune response. The chain is Arginine/agmatine antiporter (aaxC) from Chlamydia abortus (strain DSM 27085 / S26/3) (Chlamydophila abortus).